The sequence spans 237 residues: Large ribosomal subunit protein uL1 (237 aa).

Belongs to the universal ribosomal protein uL1 family. Part of the 50S ribosomal subunit.

Its function is as follows. Binds directly to 23S rRNA. The L1 stalk is quite mobile in the ribosome, and is involved in E site tRNA release. In terms of biological role, protein L1 is also a translational repressor protein, it controls the translation of the L11 operon by binding to its mRNA. The protein is Large ribosomal subunit protein uL1 of Nocardia farcinica (strain IFM 10152).